The following is a 543-amino-acid chain: Dipeptide-binding protein DppE (543 aa).

Residues 1–22 (MKRVKKLWGMGLALGLSFALMG) form the signal peptide. Residue C23 is the site of N-palmitoyl cysteine attachment. C23 carries the S-diacylglycerol cysteine lipid modification.

The protein belongs to the bacterial solute-binding protein 5 family.

Its subcellular location is the cell membrane. In terms of biological role, probably part of the ABC transporter DppBCDE involved in dipeptide transport. The sequence is that of Dipeptide-binding protein DppE (dppE) from Bacillus subtilis (strain 168).